The following is a 67-amino-acid chain: Beta-defensin 103 (67 aa).

A signal peptide spans 1–22 (MRIHYLLFALLFLFLVPVPGHG). Intrachain disulfides connect Cys-33/Cys-62, Cys-40/Cys-55, and Cys-45/Cys-63.

Highly expressed in skin and tonsils, and to a lesser extent in trachea, uterus, kidney, thymus, adenoid, pharynx and tongue. Low expression in salivary gland, bone marrow, colon, stomach, polyp and larynx. No expression in small intestine.

Its subcellular location is the secreted. Functionally, exhibits antimicrobial activity against Gram-positive bacteria S.aureus and S.pyogenes, Gram-negative bacteria P.aeruginosa and E.coli and the yeast C.albicans. Kills multiresistant S.aureus and vancomycin-resistant E.faecium. No significant hemolytic activity was observed. This Homo sapiens (Human) protein is Beta-defensin 103 (DEFB103A).